We begin with the raw amino-acid sequence, 449 residues long: UDP-N-acetylmuramate--L-alanine ligase (449 aa).

Residue 121–127 (GAHGKSS) participates in ATP binding.

It belongs to the MurCDEF family.

It localises to the cytoplasm. The enzyme catalyses UDP-N-acetyl-alpha-D-muramate + L-alanine + ATP = UDP-N-acetyl-alpha-D-muramoyl-L-alanine + ADP + phosphate + H(+). Its pathway is cell wall biogenesis; peptidoglycan biosynthesis. Its function is as follows. Cell wall formation. This Helicobacter pylori (strain J99 / ATCC 700824) (Campylobacter pylori J99) protein is UDP-N-acetylmuramate--L-alanine ligase.